A 472-amino-acid polypeptide reads, in one-letter code: Argininosuccinate lyase (472 aa).

Belongs to the lyase 1 family. Argininosuccinate lyase subfamily.

It localises to the cytoplasm. It catalyses the reaction 2-(N(omega)-L-arginino)succinate = fumarate + L-arginine. Its pathway is amino-acid biosynthesis; L-arginine biosynthesis; L-arginine from L-ornithine and carbamoyl phosphate: step 3/3. This chain is Argininosuccinate lyase, found in Polynucleobacter asymbioticus (strain DSM 18221 / CIP 109841 / QLW-P1DMWA-1) (Polynucleobacter necessarius subsp. asymbioticus).